Here is a 482-residue protein sequence, read N- to C-terminus: Glutamate--tRNA ligase (482 aa).

The 'HIGH' region motif lies at 10 to 20; the sequence is PSPTGFLHIGN. Residues 253–257 carry the 'KMSKS' region motif; the sequence is KLSKR. Residue lysine 256 participates in ATP binding.

This sequence belongs to the class-I aminoacyl-tRNA synthetase family. Glutamate--tRNA ligase type 1 subfamily. In terms of assembly, monomer.

The protein localises to the cytoplasm. The enzyme catalyses tRNA(Glu) + L-glutamate + ATP = L-glutamyl-tRNA(Glu) + AMP + diphosphate. Catalyzes the attachment of glutamate to tRNA(Glu) in a two-step reaction: glutamate is first activated by ATP to form Glu-AMP and then transferred to the acceptor end of tRNA(Glu). The polypeptide is Glutamate--tRNA ligase (Mesoplasma florum (strain ATCC 33453 / NBRC 100688 / NCTC 11704 / L1) (Acholeplasma florum)).